A 460-amino-acid polypeptide reads, in one-letter code: MGDWAKKSEDQEVSKLVDKLNLDSKSGEETDFDVADPAETSLLIKILGKGLVNTKLSLDLQQKNPNSPLHSVKTFEALHLKASLLKGIYAMGFNTPSKIQETALPTLLADPPQNMIAQSQSGTGKTAAFVLAMLSRVNVCLNHPQVLCLSPTYELAIQTGEVAARMGQFCREIKLRFAVRGEEVDRSKKIEEHILIGTPGKLLDWGIKFRLFDMKKISVFVLDEADVMIATQGHHDQCIRIHKMLNPHCQMLFFSATYGKEVMDFARLIVADPTIIRLMREEESLENIKQYYVKCKNEEGKYNAIQNIYGCISVGQAIIFCHTKRTAAWLAAKMTSDGHSVAVLTGDLTVVQRLDVLDRFRSGLEKVLITTNILSRGIDIEQLQVVVNFDLPVDLDGMADCETYLHRIGRTGRFGKSGIAINLITDEKTMKVCSDIEKHFNKKIEVLNTDSADDIEKIGT.

At Ser26 the chain carries Phosphoserine. At Thr30 the chain carries Phosphothreonine. The short motif at 73 to 101 is the Q motif element; it reads KTFEALHLKASLLKGIYAMGFNTPSKIQE. The 171-residue stretch at 106–276 folds into the Helicase ATP-binding domain; it reads TLLADPPQNM…RLIVADPTII (171 aa). 119 to 126 serves as a coordination point for ATP; the sequence is SQSGTGKT. The DEAD box signature appears at 223–226; the sequence is DEAD. Residues 287–455 form the Helicase C-terminal domain; sequence NIKQYYVKCK…VLNTDSADDI (169 aa).

Belongs to the DEAD box helicase family. DDX19/DBP5 subfamily.

Its subcellular location is the cytoplasm. The protein localises to the nucleus. It localises to the nucleoplasm. It carries out the reaction ATP + H2O = ADP + phosphate + H(+). Its function is as follows. ATP-dependent RNA helicase involved in mRNA export from the nucleus. This chain is DEAD-box helicase Dbp80 (Dbp80), found in Drosophila melanogaster (Fruit fly).